Reading from the N-terminus, the 148-residue chain is Ubiquitin-conjugating enzyme E2 10 (148 aa).

A UBC core domain is found at 1-147 (MASKRILKEL…ARSWTQKYAM (147 aa)). Residue cysteine 85 is the Glycyl thioester intermediate of the active site.

It belongs to the ubiquitin-conjugating enzyme family. Interacts with CHIP and the E3 ubiquitin ligase BB. Associates with the E3 ubiquitin ligase JMJ24. In terms of tissue distribution, ubiquitously expressed with the highest levels in rosette leaves, roots and petals.

The enzyme catalyses S-ubiquitinyl-[E1 ubiquitin-activating enzyme]-L-cysteine + [E2 ubiquitin-conjugating enzyme]-L-cysteine = [E1 ubiquitin-activating enzyme]-L-cysteine + S-ubiquitinyl-[E2 ubiquitin-conjugating enzyme]-L-cysteine.. It participates in protein modification; protein ubiquitination. Functionally, accepts the ubiquitin from the E1 complex and catalyzes its covalent attachment to other proteins. Mediates the selective degradation of short-lived and abnormal proteins. This chain is Ubiquitin-conjugating enzyme E2 10, found in Arabidopsis thaliana (Mouse-ear cress).